A 357-amino-acid polypeptide reads, in one-letter code: Ribosomal RNA small subunit methyltransferase C (357 aa).

It belongs to the methyltransferase superfamily. RsmC family. Monomer.

It localises to the cytoplasm. It carries out the reaction guanosine(1207) in 16S rRNA + S-adenosyl-L-methionine = N(2)-methylguanosine(1207) in 16S rRNA + S-adenosyl-L-homocysteine + H(+). Functionally, specifically methylates the guanine in position 1207 of 16S rRNA in the 30S particle. This chain is Ribosomal RNA small subunit methyltransferase C, found in Colwellia psychrerythraea (strain 34H / ATCC BAA-681) (Vibrio psychroerythus).